The following is a 1242-amino-acid chain: von Willebrand factor A domain-containing protein 5B2 (1242 aa).

Residues 1–138 (MPGLYCPSSW…TMTVTLHSSR (138 aa)) form the VIT domain. Residues 354–527 (ELLFLLDSSS…KALEPALSDI (174 aa)) form the VWFA domain. Disordered stretches follow at residues 569 to 650 (SRPP…SDTA), 670 to 726 (CSAS…CPLP), 751 to 794 (LAGR…GQGL), 957 to 976 (CSSE…SHLD), 987 to 1055 (KGLQ…GSDH), and 1118 to 1159 (QGDS…GLGG). A compositionally biased stretch (low complexity) spans 588–604 (PSPEEAPSAASPGTEPT). A compositionally biased stretch (polar residues) spans 605–619 (GTSEPLGTGTVSAEL). Residues 681 to 700 (TGSSESPGSQGPGSPEGSAP) show a composition bias toward low complexity. Residues 1125 to 1138 (SCSPSPSSGSEGPG) are compositionally biased toward low complexity.

This is von Willebrand factor A domain-containing protein 5B2 (VWA5B2) from Homo sapiens (Human).